The sequence spans 153 residues: Ribosome maturation factor RimP (153 aa).

It belongs to the RimP family.

It localises to the cytoplasm. Functionally, required for maturation of 30S ribosomal subunits. In Synechococcus elongatus (strain ATCC 33912 / PCC 7942 / FACHB-805) (Anacystis nidulans R2), this protein is Ribosome maturation factor RimP.